We begin with the raw amino-acid sequence, 89 residues long: MNKNEKMVRSLMGTVVSNKMNDTVVVRVERRVKHPKYGKFIKRSTKIHAHDKGNGCQIGDIVTIRECRPISKTKSWTLVKINERAEKVE.

Belongs to the universal ribosomal protein uS17 family. As to quaternary structure, part of the 30S ribosomal subunit.

One of the primary rRNA binding proteins, it binds specifically to the 5'-end of 16S ribosomal RNA. The polypeptide is Small ribosomal subunit protein uS17 (Coxiella burnetii (strain Dugway 5J108-111)).